Consider the following 429-residue polypeptide: ATP-dependent RNA helicase RhlB (429 aa).

The Q motif signature appears at 9–37; sequence DKFAQMGLEPEVLAGLESKGFHYCTPIQA. The 180-residue stretch at 40–219 folds into the Helicase ATP-binding domain; that stretch reads LPLLVEGHDL…YEHMNHPEHV (180 aa). 53-60 contacts ATP; it reads AQTGTGKT. The short motif at 165 to 168 is the DEAD box element; sequence DEAD. Residues 243–390 enclose the Helicase C-terminal domain; sequence KMLLLLSLME…VSKYDREALL (148 aa). The disordered stretch occupies residues 399 to 429; sequence VFRNRQPVNRNMRDRQGGGNSNNRRRPPRKS.

The protein belongs to the DEAD box helicase family. RhlB subfamily. Component of the RNA degradosome, which is a multiprotein complex involved in RNA processing and mRNA degradation.

Its subcellular location is the cytoplasm. It catalyses the reaction ATP + H2O = ADP + phosphate + H(+). Functionally, DEAD-box RNA helicase involved in RNA degradation. Has RNA-dependent ATPase activity and unwinds double-stranded RNA. This Aeromonas hydrophila subsp. hydrophila (strain ATCC 7966 / DSM 30187 / BCRC 13018 / CCUG 14551 / JCM 1027 / KCTC 2358 / NCIMB 9240 / NCTC 8049) protein is ATP-dependent RNA helicase RhlB.